The following is a 412-amino-acid chain: Enhancer of translation termination 1 (412 aa).

The interval 1–45 (MAKRPLGLGKQSREKKRKVESVEKKSDEPSRESTPVRSQMSVELD) is disordered. The segment covering 17–31 (RKVESVEKKSDEPSR) has biased composition (basic and acidic residues). At S30 the chain carries Phosphoserine. Positions 32–41 (ESTPVRSQMS) are enriched in polar residues.

It belongs to the ETT1 family. In terms of assembly, interacts with STM1.

The protein resides in the nucleus. In terms of biological role, required for correct translation termination and probably involved in regulation of hypoxic gene expression in association TPA1. Inhibits replication of Brome mosaic virus. The chain is Enhancer of translation termination 1 (ETT1) from Saccharomyces cerevisiae (strain RM11-1a) (Baker's yeast).